Reading from the N-terminus, the 370-residue chain is Death-associated protein kinase 2 (370 aa).

The Protein kinase domain maps to 23 to 285 (YDIGEELGSG…IQEALRHPWI (263 aa)). Residues 29 to 37 (LGSGQFAIV) and K52 contribute to the ATP site. The active-site Proton acceptor is D149. The tract at residues 287–354 (PVDTQQAMVR…RNCESDTEEN (68 aa)) is calmodulin-binding. The tract at residues 292-301 (QAMVRRESVV) is autoinhibitory domain. Residue S299 is modified to Phosphoserine. S318 is modified (phosphoserine; by autocatalysis). A Phosphoserine modification is found at S349. T369 bears the Phosphothreonine mark.

It belongs to the protein kinase superfamily. CAMK Ser/Thr protein kinase family. DAP kinase subfamily. As to quaternary structure, homodimer in its autoinhibited state. Active as monomer. Interacts with 14-3-3 proteins YWHAB, YWHAE, YWHAG, YWHAH, YWHAQ, YWHAZ and SFN; the interaction requires DAPK2 phosphorylation at Thr-369 and suppresses DAPK2 kinase activity and DAPK2-induced apoptosis. It depends on Mg(2+) as a cofactor. Autophosphorylation at Ser-318 inhibits its catalytic activity. Dephosphorylated at Ser-318 in response to activated Fas and TNF-alpha receptors. As to expression, expressed in peritubular interstitial cells of the renal cortex. Isoform 1 is found in the adult brain while isoform 2 is expressed in brains of embryos and young mice (at protein level).

The protein resides in the cytoplasm. Its subcellular location is the cytoplasmic vesicle. It is found in the autophagosome lumen. It carries out the reaction L-seryl-[protein] + ATP = O-phospho-L-seryl-[protein] + ADP + H(+). It catalyses the reaction L-threonyl-[protein] + ATP = O-phospho-L-threonyl-[protein] + ADP + H(+). Activated by Ca(2+)/calmodulin. Regulated by a double locking mechanism, involving autophosphorylation at Ser-318, calmodulin binding, and dimerization. In the inactive state, Ser-318 is phosphorylated, and the kinase is dimeric. Activation involves: dephosphorylation at Ser-318, release-of-autoinhibition mechanism where calmodulin binding induces a conformational change that relieves the steric block of the active site by the autoinhibitory domain, and generation of the monomeric active form of the kinase. Functionally, calcium/calmodulin-dependent serine/threonine kinase involved in multiple cellular signaling pathways that trigger cell survival, apoptosis, and autophagy. Capable of regulating both type I apoptotic and type II autophagic cell death signals. The former involves caspase activation, chromatin and mitochondrial condensation while the latter involves caspase-independent cell death in conjunction with accumulation of mature autophagic vesicles, plasma membrane blebs, and nuclear condensation without DNA degradation. Mediator of anoikis and a suppressor of beta-catenin-dependent anchorage-independent growth of malignant epithelial cells. May play a role in granulocytic maturation. Regulates granulocytes motility by controlling cell spreading and polarization. In Mus musculus (Mouse), this protein is Death-associated protein kinase 2 (Dapk2).